A 160-amino-acid chain; its full sequence is D-aminoacyl-tRNA deacylase (160 aa).

The Gly-cisPro motif, important for rejection of L-amino acids signature appears at 146–147 (GP).

It belongs to the DTD family. In terms of assembly, homodimer.

Its subcellular location is the cytoplasm. The catalysed reaction is glycyl-tRNA(Ala) + H2O = tRNA(Ala) + glycine + H(+). It carries out the reaction a D-aminoacyl-tRNA + H2O = a tRNA + a D-alpha-amino acid + H(+). In terms of biological role, an aminoacyl-tRNA editing enzyme that deacylates mischarged D-aminoacyl-tRNAs. Also deacylates mischarged glycyl-tRNA(Ala), protecting cells against glycine mischarging by AlaRS. Acts via tRNA-based rather than protein-based catalysis; rejects L-amino acids rather than detecting D-amino acids in the active site. By recycling D-aminoacyl-tRNA to D-amino acids and free tRNA molecules, this enzyme counteracts the toxicity associated with the formation of D-aminoacyl-tRNA entities in vivo and helps enforce protein L-homochirality. The sequence is that of D-aminoacyl-tRNA deacylase from Desulfovibrio desulfuricans (strain ATCC 27774 / DSM 6949 / MB).